Consider the following 532-residue polypeptide: MAPSSPRPALPALLVLLGALFPGPGNAQTSVSPPKVILPRGGSVQVTCSTSCDQPDLLGIETPLPKKELLLGGNNWKVYELSNVQEDSQPMCYSNCPDGQSTAKTFLTVYWTPERVELAPLPSWQPVGKDLTLRCQVEGGAPRANLTVVLLRGEKELKREPAVGEPAEVTTTVLVERDHHGANFSCRTELDLRPQGLQLFENTSAPHQLQTFVLPATPPQLVSPRVLEVDTQGTVVCSLDGLFPVLEAQVHLALGDQRLNPTVTYGNDSFSAKASVSVTAEDEGTQRLMCAVILGNQSRETLQTVTIYSFPAPNVILTKPEVSEGTEVTVKCEAHPRAKVTLNGVPAQPVGPRVQLLLKATPEDNGRSFSCSATLEVAGQLIHKNQTRELRVLYGPRLDERDCPGNWTWPENSQQTPMCQASGNPLPELKCLKDGTFPLPVGESVTVTRDLEGTYLCRARSTQGEVTRKVTVNVLSPRYEIVIITVVAAAVIMGTAGLSTYLYNRQRKIRKYRLQQAQKGTPMKPNTQATPP.

Positions 1–27 (MAPSSPRPALPALLVLLGALFPGPGNA) are cleaved as a signal peptide. The Extracellular segment spans residues 28 to 480 (QTSVSPPKVI…TVNVLSPRYE (453 aa)). Ig-like C2-type domains are found at residues 41 to 103 (GGSV…QSTA) and 128 to 193 (GKDL…LDLR). Intrachain disulfides connect C48-C92, C52-C96, and C135-C186. A glycan (N-linked (GlcNAc...) asparagine) is linked at N145. Positions 152–154 (RGE) match the Cell attachment site; atypical motif. N183, N202, N267, and N296 each carry an N-linked (GlcNAc...) asparagine glycan. Ig-like C2-type domains lie at 230 to 297 (DTQG…LGNQ) and 325 to 378 (GTEV…LEVA). Residues C237 and C290 are joined by a disulfide bond. Cysteines 332 and 371 form a disulfide. 2 N-linked (GlcNAc...) asparagine glycosylation sites follow: N385 and N406. Intrachain disulfides connect C403/C419, C419/C457, and C431/C457. Residues 412 to 464 (NSQQTPMCQASGNPLPELKCLKDGTFPLPVGESVTVTRDLEGTYLCRARSTQG) form the Ig-like C2-type 5 domain. The helical transmembrane segment at 481 to 503 (IVIITVVAAAVIMGTAGLSTYLY) threads the bilayer. The Cytoplasmic portion of the chain corresponds to 504–532 (NRQRKIRKYRLQQAQKGTPMKPNTQATPP). T521 and T530 each carry phosphothreonine.

Belongs to the immunoglobulin superfamily. ICAM family. In terms of assembly, homodimer. Interacts with MUC1 and promotes cell aggregation in epithelial cells. Interacts with ARHGEF26/SGEF. Interacts (on T cell side) with CD81, CD247 and CD9 at immunological synapses between antigen-presenting cells and T cells. In terms of processing, monoubiquitinated, which is promoted by MARCH9 and leads to endocytosis.

The protein resides in the membrane. Functionally, ICAM proteins are ligands for the leukocyte adhesion protein LFA-1 (integrin alpha-L/beta-2). During leukocyte trans-endothelial migration, ICAM1 engagement promotes the assembly of endothelial apical cups through ARHGEF26/SGEF and RHOG activation. This chain is Intercellular adhesion molecule 1 (ICAM1), found in Pan paniscus (Pygmy chimpanzee).